The primary structure comprises 172 residues: Trypsin inhibitor 1B (172 aa).

2 disulfide bridges follow: cysteine 40–cysteine 84 and cysteine 133–cysteine 139.

Belongs to the protease inhibitor I3 (leguminous Kunitz-type inhibitor) family.

WTI-1B inhibits trypsin stoichiometrically. This chain is Trypsin inhibitor 1B, found in Psophocarpus tetragonolobus (Winged bean).